The sequence spans 934 residues: Leucine--tRNA ligase 1 (934 aa).

Positions 41–51 (PYTNSPMHVGH) match the 'HIGH' region motif. Residues 616–620 (KMSKS) carry the 'KMSKS' region motif. K619 is an ATP binding site.

This sequence belongs to the class-I aminoacyl-tRNA synthetase family.

It localises to the cytoplasm. The catalysed reaction is tRNA(Leu) + L-leucine + ATP = L-leucyl-tRNA(Leu) + AMP + diphosphate. The sequence is that of Leucine--tRNA ligase 1 from Saccharolobus solfataricus (strain ATCC 35092 / DSM 1617 / JCM 11322 / P2) (Sulfolobus solfataricus).